The primary structure comprises 230 residues: MTADDRIKLEPSWKEALRAEFDQPYMSELREFLRQEHAAGKEIYPPGPMIFNALNSTPLDKVKVVILGQDPYHGPGQAHGLCFSVQPGVPAPPSLVNIYKELKRDLNIDIPNHGYLQSWAEQGVLMLNTTMTVERANAASHAGKGWQFFTDRIIEVVSEHQPHLVFLLWGAHAQSKQKLIDATKHLVLTSVHPSPLSAYRGFLGCGHFSRTNKYLEQNGETPIEWRLPPL.

Residue D70 is the Proton acceptor of the active site.

This sequence belongs to the uracil-DNA glycosylase (UDG) superfamily. UNG family.

Its subcellular location is the cytoplasm. The enzyme catalyses Hydrolyzes single-stranded DNA or mismatched double-stranded DNA and polynucleotides, releasing free uracil.. Excises uracil residues from the DNA which can arise as a result of misincorporation of dUMP residues by DNA polymerase or due to deamination of cytosine. The polypeptide is Uracil-DNA glycosylase (Pseudomonas fluorescens (strain ATCC BAA-477 / NRRL B-23932 / Pf-5)).